Here is a 224-residue protein sequence, read N- to C-terminus: Orotate phosphoribosyltransferase (224 aa).

Residues Lys26, 73-74 (YK), Arg100, Lys101, Lys104, His106, and 127-135 (EDVTTSGKS) contribute to the 5-phospho-alpha-D-ribose 1-diphosphate site. Orotate contacts are provided by Thr131 and Arg160.

Belongs to the purine/pyrimidine phosphoribosyltransferase family. PyrE subfamily. As to quaternary structure, homodimer. The cofactor is Mg(2+).

It carries out the reaction orotidine 5'-phosphate + diphosphate = orotate + 5-phospho-alpha-D-ribose 1-diphosphate. Its pathway is pyrimidine metabolism; UMP biosynthesis via de novo pathway; UMP from orotate: step 1/2. Functionally, catalyzes the transfer of a ribosyl phosphate group from 5-phosphoribose 1-diphosphate to orotate, leading to the formation of orotidine monophosphate (OMP). This is Orotate phosphoribosyltransferase from Clostridium botulinum (strain Eklund 17B / Type B).